The chain runs to 780 residues: Ribonucleoside-diphosphate reductase large subunit (780 aa).

Substrate is bound by residues T177, 192-193, G223, 393-397, and 595-599; these read SC, NLCAE, and PTVGS. A disulfide bridge connects residues C193 and C409. The active-site Proton acceptor is the N393. The active-site Cysteine radical intermediate is the C395. Catalysis depends on E397, which acts as the Proton acceptor.

Belongs to the ribonucleoside diphosphate reductase large chain family. As to quaternary structure, heterotetramer composed of a homodimer of the large subunit (R1) and a homodimer of the small subunit (R2). Larger multisubunit protein complex are also active, composed of (R1)n(R2)n.

The enzyme catalyses a 2'-deoxyribonucleoside 5'-diphosphate + [thioredoxin]-disulfide + H2O = a ribonucleoside 5'-diphosphate + [thioredoxin]-dithiol. Its function is as follows. Ribonucleoside-diphosphate reductase holoenzyme provides the precursors necessary for viral DNA synthesis. Allows virus growth in non-dividing cells, as well as reactivation from latency in infected hosts. Catalyzes the biosynthesis of deoxyribonucleotides from the corresponding ribonucleotides. The protein is Ribonucleoside-diphosphate reductase large subunit of Connochaetes taurinus (Blue wildebeest).